The primary structure comprises 564 residues: MNNSSELIAVINGFRNSGRFCDINIVINDERINAHRLILSGASEYFSILFSNNFIDSNEYEVNLSHLDYQSVNDLIDYIYGIPLSLTNDNVKYILSTADFLQIGSAITECEKYILKNLCSRNCIDFYIYADKYNNKKIESASFNTILRNILRLINDENFKYLTEESMIKILSDDMLNIKNEDFAPLILIKWLESTQQSCTVELLRCLRISLLSPQVIKSLYSHQLVSSIYECITFLNNIAFLDESFPRYHSIELISIGISNSHDKISINCYNHKKNTWEMISSRRYRCSFAVAVLDNIIYMMGGYDQSPYRSSKVIAYNTCTNSWIYDIPELKYPRSNCGGLADDEYIYCIGGIRDQDSSLTSSIDRWKPSKPYWQKYAKMREPKCDMGVAMLNGLIYVIGGIVKGDTCTDALESLSEDGWMKHQRLPIKMSNMSTIVHDGKIYISGGYNNSSVVNVISNLVLSYNPIYDEWTKLSSLNIPRINPALWSAHNKLYVGGGISDDVRTNTSETYDKEKDCWTLDNGHVLPRNYIMYKCEPIKHKYPLEKTQYTNDFLKYLESFIGS.

The BTB domain maps to 21 to 88 (CDINIVINDE…IYGIPLSLTN (68 aa)). The BACK domain occupies 123 to 219 (CIDFYIYADK…SLLSPQVIKS (97 aa)). Kelch repeat units lie at residues 252–297 (IELI…VLDN), 298–346 (IIYM…ADDE), 347–395 (YIYC…MLNG), 397–441 (IYVI…VHDG), 442–492 (KIYI…SAHN), and 494–539 (LYVG…CEPI).

Interacts (via BTB domain) with host CUL3.

It is found in the host cytoplasm. Its function is as follows. Probable substrate-specific adapter of CUL3-containing E3 ubiquitin-protein ligases which mediate the ubiquitination and subsequent proteasomal degradation of host target proteins. In Cowpox virus (strain GRI-90 / Grishak) (CPV), this protein is Kelch repeat and BTB domain-containing protein 1 (KBTB1).